A 365-amino-acid chain; its full sequence is Chorismate synthase (365 aa).

NADP(+) contacts are provided by R48 and R54. FMN-binding positions include 131-133 (RSS), 243-244 (NA), G288, 303-307 (KPTSS), and R329.

This sequence belongs to the chorismate synthase family. In terms of assembly, homotetramer. FMNH2 serves as cofactor.

It carries out the reaction 5-O-(1-carboxyvinyl)-3-phosphoshikimate = chorismate + phosphate. It functions in the pathway metabolic intermediate biosynthesis; chorismate biosynthesis; chorismate from D-erythrose 4-phosphate and phosphoenolpyruvate: step 7/7. Its function is as follows. Catalyzes the anti-1,4-elimination of the C-3 phosphate and the C-6 proR hydrogen from 5-enolpyruvylshikimate-3-phosphate (EPSP) to yield chorismate, which is the branch point compound that serves as the starting substrate for the three terminal pathways of aromatic amino acid biosynthesis. This reaction introduces a second double bond into the aromatic ring system. The chain is Chorismate synthase from Sinorhizobium medicae (strain WSM419) (Ensifer medicae).